A 392-amino-acid polypeptide reads, in one-letter code: G2/mitotic-specific cyclin-B (392 aa).

This sequence belongs to the cyclin family. Cyclin AB subfamily.

Its function is as follows. Essential for the control of the cell cycle at the G2/M (mitosis) transition. Interacts with the CDC2 protein kinase to form MPF. G2/M cyclins accumulate steadily during G2 and are abruptly destroyed at mitosis. In Hydra viridissima (Green hydra), this protein is G2/mitotic-specific cyclin-B.